The primary structure comprises 380 residues: Probable tRNA-splicing endonuclease subunit sen2 (380 aa).

Residues tyrosine 281, histidine 289, and lysine 325 contribute to the active site.

This sequence belongs to the tRNA-intron endonuclease family. Heterotetramer composed of sen2, sen15, sen34 and sen54. Interacts directly with sen54.

The enzyme catalyses pretRNA = a 3'-half-tRNA molecule with a 5'-OH end + a 5'-half-tRNA molecule with a 2',3'-cyclic phosphate end + an intron with a 2',3'-cyclic phosphate and a 5'-hydroxyl terminus.. Constitutes one of the two catalytic subunit of the tRNA-splicing endonuclease complex, a complex responsible for identification and cleavage of the splice sites in pre-tRNA. It cleaves pre-tRNA at the 5'- and 3'-splice sites to release the intron. The products are an intron and two tRNA half-molecules bearing 2',3'-cyclic phosphate and 5'-OH termini. There are no conserved sequences at the splice sites, but the intron is invariably located at the same site in the gene, placing the splice sites an invariant distance from the constant structural features of the tRNA body. This subunit may anchor the endonuclease complex to the nuclear membrane. Probably carries the active site for 5'-splice site cleavage. This is Probable tRNA-splicing endonuclease subunit sen2 (sen2) from Schizosaccharomyces pombe (strain 972 / ATCC 24843) (Fission yeast).